A 171-amino-acid chain; its full sequence is Disulfide bond formation protein B (171 aa).

Topologically, residues 1–8 (MRLSYRLV) are cytoplasmic. The chain crosses the membrane as a helical span at residues 9-25 (SGLLVLASIVGMSFALY). At 26-43 (LEHVKGLEPCPLCIFQRV) the chain is on the periplasmic side. Cys-35 and Cys-38 are disulfide-bonded. The chain crosses the membrane as a helical span at residues 44-60 (GLMAMGFVALIAFLHNP). The Cytoplasmic segment spans residues 61–67 (VSNAIKR). A helical membrane pass occupies residues 68–85 (FYAFLAGVAILWSVGVAG). Over 86 to 142 (RHVWLQHLPPDQVPSCGPGLNYLIDALPMKTVLQEVLSGSGECAAIDWTFLGQSLPV) the chain is Periplasmic. Cys-101 and Cys-128 are oxidised to a cystine. Residues 143–161 (WSLAYFLLLLLVCLWQLFR) traverse the membrane as a helical segment. Topologically, residues 162-171 (FYPVFKTAKK) are cytoplasmic.

It belongs to the DsbB family.

The protein localises to the cell inner membrane. Required for disulfide bond formation in some periplasmic proteins. Acts by oxidizing the DsbA protein. This is Disulfide bond formation protein B from Acinetobacter baumannii (strain ATCC 17978 / DSM 105126 / CIP 53.77 / LMG 1025 / NCDC KC755 / 5377).